We begin with the raw amino-acid sequence, 352 residues long: Ion-translocating oxidoreductase complex subunit D (352 aa).

Transmembrane regions (helical) follow at residues 20 to 40 (IMLL…WFFG), 42 to 62 (GTLF…AIVL), 69 to 91 (VASH…SIPP), and 123 to 143 (PAMI…TSWL). Residue threonine 187 is modified to FMN phosphoryl threonine. The next 5 membrane-spanning stretches (helical) occupy residues 215–235 (LAGV…VFLL), 242–262 (WHIP…GWLF), 267–287 (LASP…FFIL), 301–321 (LIFG…GGYP), and 322–342 (DGVA…DYYT).

The protein belongs to the NqrB/RnfD family. The complex is composed of six subunits: RsxA, RsxB, RsxC, RsxD, RsxE and RsxG. FMN is required as a cofactor.

It localises to the cell inner membrane. Part of a membrane-bound complex that couples electron transfer with translocation of ions across the membrane. Required to maintain the reduced state of SoxR. The polypeptide is Ion-translocating oxidoreductase complex subunit D (Salmonella paratyphi A (strain ATCC 9150 / SARB42)).